The sequence spans 360 residues: Ferrochelatase (360 aa).

2 residues coordinate Fe cation: His-210 and Glu-291.

Belongs to the ferrochelatase family.

Its subcellular location is the cytoplasm. The enzyme catalyses heme b + 2 H(+) = protoporphyrin IX + Fe(2+). Its pathway is porphyrin-containing compound metabolism; protoheme biosynthesis; protoheme from protoporphyrin-IX: step 1/1. Catalyzes the ferrous insertion into protoporphyrin IX. This Pseudoalteromonas atlantica (strain T6c / ATCC BAA-1087) protein is Ferrochelatase.